The primary structure comprises 212 residues: NAD(P)H-hydrate epimerase (212 aa).

Residues 11–212 (MRHYDFYTIN…ANDMGTYAVD (202 aa)) form the YjeF N-terminal domain. 60–64 (NNGGD) serves as a coordination point for (6S)-NADPHX. The K(+) site is built by N61 and D123. (6S)-NADPHX contacts are provided by residues 127–133 (GIGIDRA), Y138, and D156. S159 is a binding site for K(+).

The protein belongs to the NnrE/AIBP family. K(+) serves as cofactor.

It catalyses the reaction (6R)-NADHX = (6S)-NADHX. The catalysed reaction is (6R)-NADPHX = (6S)-NADPHX. Its function is as follows. Catalyzes the epimerization of the S- and R-forms of NAD(P)HX, a damaged form of NAD(P)H that is a result of enzymatic or heat-dependent hydration. This is a prerequisite for the S-specific NAD(P)H-hydrate dehydratase to allow the repair of both epimers of NAD(P)HX. The polypeptide is NAD(P)H-hydrate epimerase (Limosilactobacillus reuteri (strain DSM 20016) (Lactobacillus reuteri)).